A 345-amino-acid chain; its full sequence is Probable 1-aminocyclopropane-1-carboxylate deaminase (345 aa).

Lysine 58 is subject to N6-(pyridoxal phosphate)lysine. Residue serine 85 is the Nucleophile of the active site.

The protein belongs to the ACC deaminase/D-cysteine desulfhydrase family. It depends on pyridoxal 5'-phosphate as a cofactor.

The enzyme catalyses 1-aminocyclopropane-1-carboxylate + H2O = 2-oxobutanoate + NH4(+). Functionally, catalyzes a cyclopropane ring-opening reaction, the irreversible conversion of 1-aminocyclopropane-1-carboxylate (ACC) to ammonia and alpha-ketobutyrate. This chain is Probable 1-aminocyclopropane-1-carboxylate deaminase, found in Cryptococcus neoformans var. neoformans serotype D (strain JEC21 / ATCC MYA-565) (Filobasidiella neoformans).